The primary structure comprises 336 residues: Acetyl-coenzyme A carboxylase carboxyl transferase subunit alpha (336 aa).

Residues Ala-48–Gly-308 form the CoA carboxyltransferase C-terminal domain.

This sequence belongs to the AccA family. Acetyl-CoA carboxylase is a heterohexamer composed of biotin carboxyl carrier protein (AccB), biotin carboxylase (AccC) and two subunits each of ACCase subunit alpha (AccA) and ACCase subunit beta (AccD).

It localises to the cytoplasm. The catalysed reaction is N(6)-carboxybiotinyl-L-lysyl-[protein] + acetyl-CoA = N(6)-biotinyl-L-lysyl-[protein] + malonyl-CoA. It functions in the pathway lipid metabolism; malonyl-CoA biosynthesis; malonyl-CoA from acetyl-CoA: step 1/1. Functionally, component of the acetyl coenzyme A carboxylase (ACC) complex. First, biotin carboxylase catalyzes the carboxylation of biotin on its carrier protein (BCCP) and then the CO(2) group is transferred by the carboxyltransferase to acetyl-CoA to form malonyl-CoA. The protein is Acetyl-coenzyme A carboxylase carboxyl transferase subunit alpha of Chlorobaculum parvum (strain DSM 263 / NCIMB 8327) (Chlorobium vibrioforme subsp. thiosulfatophilum).